Reading from the N-terminus, the 307-residue chain is MAEISDLDRQIEQLRRCELIKESEVKALCAKAREILVEESNVQRVDSPVTVCGDIHGQFYDLKELFRVGGDVPETNYLFMGDFVDRGFYSVETFLLLLALKVRYPDRITLIRGNHESRQITQVYGFYDECLRKYGSVTVWRYCTEIFDYLSLSAIIDGKIFCVHGGLSPSIQTLDQIRTIDRKQEVPHDGPMCDLLWSDPEDTTGWGVSPRGAGYLFGSDVVAQFNAANDIDMICRAHQLVMEGYKWHFNETVLTVWSAPNYCYRCGNVAAILELDEHLQKDFIIFEAAPQETRGIPSKKPVADYFL.

Ala-2 is subject to N-acetylalanine. Residues Asp-54, His-56, Asp-82, and Asn-114 each coordinate Mn(2+). Residue His-115 is the Proton donor of the active site. His-164 and His-238 together coordinate Mn(2+). The residue at position 307 (Leu-307) is a Leucine methyl ester.

The protein belongs to the PPP phosphatase family. PP-4 (PP-X) subfamily. Serine/threonine-protein phosphatase 4 (PP4) occurs in different assemblies of the catalytic and one or more regulatory subunits. Component of the PP4 complexes PPP4C-PPP4R1, PPP4C-PPP4R2, PPP4C-PPP4R2-PPP4R3A, PPP4C-PPP4R2-PPP4R3B and PPP4C-PPP4R4. The PPP4C-PPP4R2 complex appears to be a tetramer composed of 2 molecules of PPP4C and 2 molecules of PPP4R2. Interacts with REL, NFKB1/p50 and RELA. Interacts with SMN1 and GEMIN4. Interacts with IRS4 (phosphorylated). Interacts with SMEK1/PPP4R3A; the interaction requires PP4R2. Interacts with HDAC3. Mn(2+) is required as a cofactor. Methylation at the C-terminal Leu-307 is critical for interactions with regulatory subunits and functions in DNA repair.

It is found in the cytoplasm. The protein localises to the nucleus. Its subcellular location is the cytoskeleton. The protein resides in the microtubule organizing center. It localises to the centrosome. The enzyme catalyses O-phospho-L-seryl-[protein] + H2O = L-seryl-[protein] + phosphate. It catalyses the reaction O-phospho-L-threonyl-[protein] + H2O = L-threonyl-[protein] + phosphate. Protein phosphatase that is involved in many processes such as microtubule organization at centrosomes, maturation of spliceosomal snRNPs, apoptosis, DNA repair, tumor necrosis factor (TNF)-alpha signaling, activation of c-Jun N-terminal kinase MAPK8, regulation of histone acetylation, DNA damage checkpoint signaling, NF-kappa-B activation and cell migration. The PPP4C-PPP4R1 PP4 complex may play a role in dephosphorylation and regulation of HDAC3. The PPP4C-PPP4R2-PPP4R3A PP4 complex specifically dephosphorylates H2AX phosphorylated on Ser-140 (gamma-H2AX) generated during DNA replication and required for DNA double strand break repair. Dephosphorylates NDEL1 at CDK1 phosphorylation sites and negatively regulates CDK1 activity in interphase. In response to DNA damage, catalyzes RPA2 dephosphorylation, an essential step for DNA repair since it allows the efficient RPA2-mediated recruitment of RAD51 to chromatin. This is Serine/threonine-protein phosphatase 4 catalytic subunit (PPP4C) from Homo sapiens (Human).